We begin with the raw amino-acid sequence, 248 residues long: Probable transcriptional regulatory protein RPA1097 (248 aa).

The interval 1–21 (MAGHSQFKNIMHRKGRQDAQR) is disordered.

The protein belongs to the TACO1 family.

The protein localises to the cytoplasm. The chain is Probable transcriptional regulatory protein RPA1097 from Rhodopseudomonas palustris (strain ATCC BAA-98 / CGA009).